Consider the following 133-residue polypeptide: MSMSDTLADMLTRIRNAQRSRLMYVNAPSSRRKEAILDVLVKEGFIHSFLVHEVRNGVKEINIKLKYSPKGESNIKEINRVSTPGKRVYLSIKKLRPYYNNMGIYIISTSKGIMSDREARKLGVGGEVICKVF.

Belongs to the universal ribosomal protein uS8 family. In terms of assembly, part of the 30S ribosomal subunit. Contacts proteins S5 and S12.

One of the primary rRNA binding proteins, it binds directly to 16S rRNA central domain where it helps coordinate assembly of the platform of the 30S subunit. In Orientia tsutsugamushi (strain Ikeda) (Rickettsia tsutsugamushi), this protein is Small ribosomal subunit protein uS8.